Consider the following 350-residue polypeptide: Phosphoribosylformylglycinamidine cyclo-ligase (350 aa).

The protein belongs to the AIR synthase family.

Its subcellular location is the cytoplasm. The enzyme catalyses 2-formamido-N(1)-(5-O-phospho-beta-D-ribosyl)acetamidine + ATP = 5-amino-1-(5-phospho-beta-D-ribosyl)imidazole + ADP + phosphate + H(+). It participates in purine metabolism; IMP biosynthesis via de novo pathway; 5-amino-1-(5-phospho-D-ribosyl)imidazole from N(2)-formyl-N(1)-(5-phospho-D-ribosyl)glycinamide: step 2/2. This Pseudoalteromonas translucida (strain TAC 125) protein is Phosphoribosylformylglycinamidine cyclo-ligase.